A 194-amino-acid chain; its full sequence is WASH complex subunit 3 (194 aa).

Residue methionine 1 is modified to N-acetylmethionine. A coiled-coil region spans residues 46 to 74 (TVCEEKLADLSLRIQQIETTLNILDAKLS). Disordered stretches follow at residues 93 to 121 (SVTN…QESE) and 159 to 194 (EGLD…SFSD). Residues 103-121 (TSEQPQQNSTQDSGLQESE) show a composition bias toward polar residues.

The protein belongs to the CCDC53 family. In terms of assembly, component of the WASH core complex also described as WASH regulatory complex (SHRC) composed of WASH (WASHC1, WASH2P or WASH3P), WASHC2 (WASHC2A or WASHC2C), WASHC3, WASHC4 and WASHC5. The WASH core complex associates via WASHC2 with the F-actin-capping protein dimer (formed by CAPZA1, CAPZA2 or CAPZA3 and CAPZB) in a transient or substoichiometric manner which was initially described as WASH complex.

The protein resides in the early endosome. Functionally, acts as a component of the WASH core complex that functions as a nucleation-promoting factor (NPF) at the surface of endosomes, where it recruits and activates the Arp2/3 complex to induce actin polymerization, playing a key role in the fission of tubules that serve as transport intermediates during endosome sorting. The chain is WASH complex subunit 3 from Homo sapiens (Human).